A 504-amino-acid polypeptide reads, in one-letter code: Tegument protein VP16 homolog (504 aa).

3 disordered regions span residues 354-381 (EAGG…RLQR), 395-421 (ATPR…QGRR), and 435-486 (RSGP…ANPF). A compositionally biased stretch (low complexity) spans 361 to 378 (RSGSTRTRGRAARSTTGR). The segment covering 447–460 (PVRSGLGLSRARGS) has biased composition (low complexity).

Belongs to the herpesviridae tegument protein VP16 protein family. Associates with the VP16-induced complex; binding to host HCFC1 activates VP16 for association with the octamer motif-binding host protein POU2F1, to form a multiprotein-DNA complex responsible for activating transcription of the viral immediate early genes.

It localises to the virion tegument. The protein resides in the host nucleus. In terms of biological role, transcriptional activator of immediate-early (IE) gene products (alpha genes). Acts as a key activator of lytic infection by initiating the lytic program through the assembly of the transcriptional regulatory VP16-induced complex composed of VP16 and two cellular factors, HCFC1 and POU2F1. VP16-induced complex represents a regulatory switch: when it is on, it promotes IE-gene expression and thus lytic infection, and when it is off, it limits IE-gene transcription favoring latent infection. Its function is as follows. May play a role in the aggregation of tegument proteins around nucleocapsids during virus morphogenesis. This is Tegument protein VP16 homolog from Bos taurus (Bovine).